The primary structure comprises 123 residues: Ribonuclease P protein component (123 aa).

It belongs to the RnpA family. As to quaternary structure, consists of a catalytic RNA component (M1 or rnpB) and a protein subunit.

It catalyses the reaction Endonucleolytic cleavage of RNA, removing 5'-extranucleotides from tRNA precursor.. In terms of biological role, RNaseP catalyzes the removal of the 5'-leader sequence from pre-tRNA to produce the mature 5'-terminus. It can also cleave other RNA substrates such as 4.5S RNA. The protein component plays an auxiliary but essential role in vivo by binding to the 5'-leader sequence and broadening the substrate specificity of the ribozyme. The sequence is that of Ribonuclease P protein component from Streptococcus pneumoniae serotype 4 (strain ATCC BAA-334 / TIGR4).